The following is a 218-amino-acid chain: MDKSESTSVGRNRRRRPRRGSRSAPSSADANFRVLSQQLSRLNKTLAAGRPTINHPTFVGSERCRPGYTFTSITLKPPKIDRGSYYGKRLLLPDSVTEYDKKLVSRIQIRVNPLRKFDSTVWVTVRKVPASSDLSVAAISAMFADGASPVLVYQYAASGVQANNKLLYDLLAMRADIGDMRKYAVLVYSKDDALETDELVLHVDIEHQRIPTSGVLPV.

M1 carries the post-translational modification N-acetylmethionine; by host. The tract at residues 1-28 (MDKSESTSVGRNRRRRPRRGSRSAPSSA) is disordered. The span at 11 to 21 (RNRRRRPRRGS) shows a compositional bias: basic residues.

This sequence belongs to the cucumovirus capsid protein family.

It localises to the virion. In terms of biological role, capsid protein. Probably binds RNA and plays a role in packaging. This is Capsid protein from Cucumber mosaic virus (strain E5) (CMV).